We begin with the raw amino-acid sequence, 672 residues long: PHD finger protein MALE STERILITY 1 (672 aa).

The segment at 614-664 (RIECECGATEEDGERMVCCDICEVWQHTRCVGVQHNEEVPRIFLCQSCDQH) adopts a PHD-type zinc-finger fold.

In closed flower buds, especially in anthers.

Its subcellular location is the nucleus. Its function is as follows. Transcriptional activator required for anther and post-meiotic pollen development and maturation. Seems to regulate inflorescence branching and floral development. May control tapetal development by directly regulating tapetal programmed cell death (PCD) and breakdown. Implicated in pollen cytosolic components and wall development (e.g. exine and intine formation). In Arabidopsis thaliana (Mouse-ear cress), this protein is PHD finger protein MALE STERILITY 1 (MS1).